The sequence spans 101 residues: MRFNIYFSLHTYMYIHIYIYICMYTYVYKYMNTVMTTLAKCVGIMTACIQEPVPACQQNRLALRQIPRRHPPSRDHHLLLRLRPRPLLLRPPRTRIPRLRR.

This is an uncharacterized protein from Saccharomyces cerevisiae (strain ATCC 204508 / S288c) (Baker's yeast).